The sequence spans 142 residues: Large ribosomal subunit protein uL11 (142 aa).

The protein belongs to the universal ribosomal protein uL11 family. In terms of assembly, part of the ribosomal stalk of the 50S ribosomal subunit. Interacts with L10 and the large rRNA to form the base of the stalk. L10 forms an elongated spine to which L12 dimers bind in a sequential fashion forming a multimeric L10(L12)X complex. In terms of processing, one or more lysine residues are methylated.

In terms of biological role, forms part of the ribosomal stalk which helps the ribosome interact with GTP-bound translation factors. In Acinetobacter baumannii (strain AB307-0294), this protein is Large ribosomal subunit protein uL11.